Here is a 341-residue protein sequence, read N- to C-terminus: Platelet-activating factor receptor (341 aa).

Topologically, residues 1 to 16 are extracellular; sequence MEQNGSFRVDSEFRYT. A glycan (N-linked (GlcNAc...) asparagine) is linked at asparagine 4. Residues 17–38 traverse the membrane as a helical segment; that stretch reads LFPIVYSVIFVLGVVANGYVLW. Residues 39-54 lie on the Cytoplasmic side of the membrane; sequence VFATLYPSKKLNEIKI. The chain crosses the membrane as a helical span at residues 55-74; that stretch reads FMVNLTVADLLFLMTLPLWI. The Extracellular segment spans residues 75–91; the sequence is VYYSNEGDWIVHKFLCN. The cysteines at positions 90 and 173 are disulfide-linked. The chain crosses the membrane as a helical span at residues 92-113; it reads LAGCLFFINTYCSVAFLGVITY. Topologically, residues 114-133 are cytoplasmic; sequence NRYQAVAYPIKTAQATTRKR. A helical membrane pass occupies residues 134–155; that stretch reads GITLSLVIWISIAATASYFLAT. Residues 156–184 are Extracellular-facing; sequence DSTNVVPKKDGSGNITRCFEHYEPYSVPI. A glycan (N-linked (GlcNAc...) asparagine) is linked at asparagine 169. A helical membrane pass occupies residues 185-205; it reads LVVHIFITSCFFLVFFLIFYC. At 206–233 the chain is on the cytoplasmic side; that stretch reads NMVIIHTLLTRPVRQQRKPEVKRRALWM. Residues 234 to 254 traverse the membrane as a helical segment; sequence VCTVLAVFVICFVPHHVVQLP. The Extracellular segment spans residues 255–275; it reads WTLAELGYQTNFHQAINDAHQ. A helical transmembrane segment spans residues 276 to 295; sequence ITLCLLSTNCVLDPVIYCFL. The Cytoplasmic segment spans residues 296-341; the sequence is TKKFRKHLSEKFYSMRSSRKCSRATSDTCTEVMMPANQTPVLPLKN.

The protein belongs to the G-protein coupled receptor 1 family. Interacts with ARRB1. In terms of tissue distribution, present in almost all organs including spleen, small intestine, kidney, lung, liver and brain.

It is found in the cell membrane. In terms of biological role, receptor for platelet activating factor, a chemotactic phospholipid mediator that possesses potent inflammatory, smooth-muscle contractile and hypotensive activity. Seems to mediate its action via a G protein that activates a phosphatidylinositol-calcium second messenger system. The polypeptide is Platelet-activating factor receptor (Ptafr) (Rattus norvegicus (Rat)).